The following is a 215-amino-acid chain: Calcium-binding protein 7 (215 aa).

The Cytoplasmic segment spans residues 1–188 (MPFHPVTAAL…QIRQTCVRKS (188 aa)). EF-hand domains follow at residues 33–68 (DELE…LGYM) and 69–104 (PNEV…KLST). Ca(2+) is bound by residues Asp46, Asp48, Asn50, Glu57, Asp82, Asp84, Asp86, Gln88, and Glu93. The helical; Anchor for type IV membrane protein transmembrane segment at 189-209 (LICAFAIAFIISVMLIAANQV) threads the bilayer. Topologically, residues 210 to 215 (LRSGMK) are extracellular.

In terms of assembly, interacts with PI4KB. This binding competes with FREQ/NCS1 binding in a calcium-dependent manner.

The protein localises to the golgi apparatus. It localises to the trans-Golgi network membrane. The protein resides in the cytoplasm. Its subcellular location is the perinuclear region. It is found in the cell membrane. Negatively regulates Golgi-to-plasma membrane trafficking by interacting with PI4KB and inhibiting its activity. This is Calcium-binding protein 7 (CABP7) from Homo sapiens (Human).